The sequence spans 291 residues: ATP synthase gamma chain (291 aa).

It belongs to the ATPase gamma chain family. In terms of assembly, F-type ATPases have 2 components, CF(1) - the catalytic core - and CF(0) - the membrane proton channel. CF(1) has five subunits: alpha(3), beta(3), gamma(1), delta(1), epsilon(1). CF(0) has three main subunits: a, b and c.

The protein resides in the cell inner membrane. Produces ATP from ADP in the presence of a proton gradient across the membrane. The gamma chain is believed to be important in regulating ATPase activity and the flow of protons through the CF(0) complex. The polypeptide is ATP synthase gamma chain (Persephonella marina (strain DSM 14350 / EX-H1)).